Reading from the N-terminus, the 285-residue chain is MEIGLREWLIVIGIVVIGGILFDGWRRMRGSKGKLKFKLERKIADAPEAVSENSELLGPSRSVDFPQGAGFEPDEENLPSLSVRGPSRRRLDDELDDLGLELDEPVHTAVAEPVSRLRAAEPKFESRRIEQPEHSEPRELPPIEEYLVIIVVSRDGAGFKGPALLQSILESGLRFGEKDIFHRHESLAGNGEVLFSMANALKPGTFDLDDIDHFSTRAVSFFLVLPGPRHPKQAFELMVAAARKLAQELNGELKDDQRSVMTAQTIEHYRQRIADFERRQLTHKR.

A topological domain (periplasmic) is located at residue Met-1. Residues 2–22 (EIGLREWLIVIGIVVIGGILF) form a helical membrane-spanning segment. Topologically, residues 23–285 (DGWRRMRGSK…FERRQLTHKR (263 aa)) are cytoplasmic. A disordered region spans residues 49-88 (AVSENSELLGPSRSVDFPQGAGFEPDEENLPSLSVRGPSR).

It belongs to the ZipA family. In terms of assembly, interacts with FtsZ via their C-terminal domains.

The protein resides in the cell inner membrane. Its function is as follows. Essential cell division protein that stabilizes the FtsZ protofilaments by cross-linking them and that serves as a cytoplasmic membrane anchor for the Z ring. Also required for the recruitment to the septal ring of downstream cell division proteins. This is Cell division protein ZipA from Azotobacter vinelandii (strain DJ / ATCC BAA-1303).